The following is a 1129-amino-acid chain: Serine/threonine-protein kinase 11-interacting protein (1129 aa).

LRR repeat units follow at residues 107 to 128 (SLRSLELRCLPPHCLRGLRSVY), 130 to 150 (QLEVLTCYRCVSSLEEVIALC), 162 to 183 (VLHTLDFSYNTLKNLDGSLELL), 185 to 206 (SLKILDLSHNQITECGSYLKVL), 208 to 229 (ELQYLNLGYNHLTAVPELSVGN), 232 to 253 (KLHSLILKHNQLSGTSGLENLP), 254 to 275 (NLQHLDLSYNLLLEHSQLSGLA), and 279 to 300 (NLKQLFLEGNPLYFQKDYRALT). 4 disordered regions span residues 335-392 (RLQP…RRGQ), 428-475 (DPEY…HVAP), 654-678 (GDIYSPESLQQGKEPTAGLHRNHTG), and 696-724 (NPTGETSTPLRPLSAEPPQGDDGGGGLAA). Positions 337 to 355 (QPSSSATESSCTGDLTDSY) are enriched in polar residues. Positions 365–374 (LPRKKSRVKV) are enriched in basic residues. Residues 381 to 391 (ERSDSEYERRG) are compositionally biased toward basic and acidic residues. The span at 436–447 (HSPPPRASPSPT) shows a compositional bias: pro residues. Residues 448–458 (APSSVPKQKSP) are compositionally biased toward low complexity.

Belongs to the STK11IP family.

It localises to the cytoplasm. This is Serine/threonine-protein kinase 11-interacting protein (stk11ip) from Xenopus tropicalis (Western clawed frog).